A 386-amino-acid chain; its full sequence is MATTKSFLILFFMILATTSSTCAKLEEMVTVLSIDGGGIKGIIPAIILEFLEGQLQEVDNNKDARLADYFDVIGGTSTGGLLTAMITTPNENNRPFAAAKDIVPFYFEHGPHIFNYSGSIFGPRYDGKYLLQVLQEKLGETRVHQALTEVAISSFDIKTNKPVIFTKSNLAKSPELDAKMYDICYSTAAAPIYFPPHHFVTHTSNGATYEFNLVDGGVATVGDPALLSLSVATRLAQEDPAFSSIKSLDYKQMLLLSLGTGTNSEFDKTYTAEEAAKWGPLRWMLAIQQMTNAASSYMTDYYISTVFQARHSQNNYLRVQENALTGTTTEMDDASEANMELLVQVGETLLKKPVSKDSPETYEEALKRFAKLLSNRKKLRANKASY.

Positions 1 to 23 (MATTKSFLILFFMILATTSSTCA) are cleaved as a signal peptide. Residues 32–229 (LSIDGGGIKG…TVGDPALLSL (198 aa)) form the PNPLA domain. Positions 36-41 (GGGIKG) match the GXGXXG motif. The short motif at 75–79 (GTSTG) is the GXSXG element. The active-site Nucleophile is Ser77. Asn115 carries N-linked (GlcNAc...) asparagine glycosylation. Catalysis depends on Asp215, which acts as the Proton acceptor. Residues 215 to 217 (DGG) carry the DGA/G motif. Residues 321–384 (ENALTGTTTE…NRKKLRANKA (64 aa)) are a coiled coil.

This sequence belongs to the patatin family. As to expression, tuber.

The protein resides in the vacuole. Probable lipolytic acyl hydrolase (LAH), an activity which is thought to be involved in the response of tubers to pathogens. The chain is Patatin-06 from Solanum tuberosum (Potato).